A 204-amino-acid polypeptide reads, in one-letter code: Thioredoxin-like 4, chloroplastic (204 aa).

A chloroplast-targeting transit peptide spans 1–27 (MSSLLNISHCSYHGYSGLTSRGGINTV). Residues 63-201 (AKSLSQENLV…IDAAILKYTS (139 aa)) form the Thioredoxin domain. Active-site nucleophile residues include cysteine 119 and cysteine 122. A disulfide bridge connects residues cysteine 119 and cysteine 122.

The protein belongs to the thioredoxin family.

It localises to the plastid. It is found in the chloroplast. Its function is as follows. Probable thiol-disulfide oxidoreductase that may participate in various redox reactions. The protein is Thioredoxin-like 4, chloroplastic of Arabidopsis thaliana (Mouse-ear cress).